A 221-amino-acid chain; its full sequence is Putative 3-methyladenine DNA glycosylase (221 aa).

Belongs to the DNA glycosylase MPG family.

This chain is Putative 3-methyladenine DNA glycosylase, found in Herpetosiphon aurantiacus (strain ATCC 23779 / DSM 785 / 114-95).